The chain runs to 383 residues: S-adenosylmethionine synthase (383 aa).

His15 is a binding site for ATP. Mg(2+) is bound at residue Asp17. Glu43 contacts K(+). L-methionine contacts are provided by Glu56 and Gln99. The flexible loop stretch occupies residues 99-109 (QSPDINQGVDR). ATP-binding positions include 164 to 166 (DAK), 230 to 231 (RF), Asp239, 245 to 246 (RK), Ala262, and Lys266. Asp239 contacts L-methionine. Lys270 is a binding site for L-methionine.

The protein belongs to the AdoMet synthase family. Homotetramer; dimer of dimers. The cofactor is Mg(2+). Requires K(+) as cofactor.

It localises to the cytoplasm. The catalysed reaction is L-methionine + ATP + H2O = S-adenosyl-L-methionine + phosphate + diphosphate. It participates in amino-acid biosynthesis; S-adenosyl-L-methionine biosynthesis; S-adenosyl-L-methionine from L-methionine: step 1/1. Catalyzes the formation of S-adenosylmethionine (AdoMet) from methionine and ATP. The overall synthetic reaction is composed of two sequential steps, AdoMet formation and the subsequent tripolyphosphate hydrolysis which occurs prior to release of AdoMet from the enzyme. The sequence is that of S-adenosylmethionine synthase from Shewanella amazonensis (strain ATCC BAA-1098 / SB2B).